The chain runs to 247 residues: DNA polymerase sliding clamp (247 aa).

This sequence belongs to the PCNA family. Homotrimer. The subunits circularize to form a toroid; DNA passes through its center. Replication factor C (RFC) is required to load the toroid on the DNA.

In terms of biological role, sliding clamp subunit that acts as a moving platform for DNA processing. Responsible for tethering the catalytic subunit of DNA polymerase and other proteins to DNA during high-speed replication. This Methanoculleus marisnigri (strain ATCC 35101 / DSM 1498 / JR1) protein is DNA polymerase sliding clamp.